The primary structure comprises 222 residues: Putative N-acetylmannosamine-6-phosphate 2-epimerase (222 aa).

Belongs to the NanE family.

The enzyme catalyses an N-acyl-D-glucosamine 6-phosphate = an N-acyl-D-mannosamine 6-phosphate. It functions in the pathway amino-sugar metabolism; N-acetylneuraminate degradation; D-fructose 6-phosphate from N-acetylneuraminate: step 3/5. Functionally, converts N-acetylmannosamine-6-phosphate (ManNAc-6-P) to N-acetylglucosamine-6-phosphate (GlcNAc-6-P). The chain is Putative N-acetylmannosamine-6-phosphate 2-epimerase from Staphylococcus aureus (strain Mu3 / ATCC 700698).